Reading from the N-terminus, the 677-residue chain is DNA ligase (677 aa).

Residues 34–38, 83–84, and Glu-117 each bind NAD(+); these read DAEYD and SL. Residue Lys-119 is the N6-AMP-lysine intermediate of the active site. 4 residues coordinate NAD(+): Arg-140, Glu-175, Lys-283, and Lys-307. Zn(2+) contacts are provided by Cys-401, Cys-404, Cys-419, and Cys-425. Residues 594 to 677 enclose the BRCT domain; the sequence is SHLSLLHGKT…QYISPNTNEN (84 aa).

It belongs to the NAD-dependent DNA ligase family. LigA subfamily. The cofactor is Mg(2+). Mn(2+) serves as cofactor.

The catalysed reaction is NAD(+) + (deoxyribonucleotide)n-3'-hydroxyl + 5'-phospho-(deoxyribonucleotide)m = (deoxyribonucleotide)n+m + AMP + beta-nicotinamide D-nucleotide.. Its function is as follows. DNA ligase that catalyzes the formation of phosphodiester linkages between 5'-phosphoryl and 3'-hydroxyl groups in double-stranded DNA using NAD as a coenzyme and as the energy source for the reaction. It is essential for DNA replication and repair of damaged DNA. The protein is DNA ligase of Ehrlichia canis (strain Jake).